A 429-amino-acid chain; its full sequence is Probable M18 family aminopeptidase 2 (429 aa).

His82, His156, and His401 together coordinate Zn(2+).

It belongs to the peptidase M18 family. Requires Zn(2+) as cofactor.

In Pseudomonas entomophila (strain L48), this protein is Probable M18 family aminopeptidase 2.